Consider the following 339-residue polypeptide: MKFSRQLVLGSLAVLVLSACSSSPTQRRQAKDDFDYLETTEFKPWVLPQGATPQFYPNYDIPQGAFHGGVGNVVDIRPPQQVLELIPGARAERQNGEVTLWMLRQDEAQKVWDTALKMIAERKIPLRKQTDSMVETDWVDWVSEDEDVTIGSRYLMSMVETNNRYGFKISLIGWRENGQVQTVSTTNKERYNAFMTNLVTTRYDSDVRAEAARRAQELVKQIPITMGSDRSGFPVIIARTPYDVLWQRLPELLPKMGFTIEERNQSQGTVKAKYAAPDDEFWQQVGVKPIELKSGTYTFLFGDLGNRTSINVTDSAGKPVNEALLKEMVPVLSAVVDKK.

An N-terminal signal peptide occupies residues 1–19; that stretch reads MKFSRQLVLGSLAVLVLSA. Cys20 carries the N-palmitoyl cysteine lipid modification. The S-diacylglycerol cysteine moiety is linked to residue Cys20.

Belongs to the BamC family. As to quaternary structure, part of the Bam complex.

It is found in the cell outer membrane. Functionally, part of the outer membrane protein assembly complex, which is involved in assembly and insertion of beta-barrel proteins into the outer membrane. This is Outer membrane protein assembly factor BamC from Vibrio cholerae serotype O1 (strain ATCC 39315 / El Tor Inaba N16961).